The primary structure comprises 927 residues: Tubulin monoglycylase TTLL3 (927 aa).

The segment covering 35–47 (RSQPSELRTNFSS) has biased composition (polar residues). Disordered stretches follow at residues 35–113 (RSQP…PQPV) and 194–227 (HPPG…EENE). Residues 216 to 226 (DATEDEDEEEN) are compositionally biased toward acidic residues. The region spanning 345–702 (VLKLVVKLEE…DRRLDRSCDT (358 aa)) is the TTL domain. Residues lysine 476, 482 to 483 (RG), 514 to 517 (QKYI), 527 to 529 (KFD), and 571 to 572 (CN) contribute to the ATP site. Residue arginine 482 coordinates a protein. Aspartate 649, glutamate 662, and asparagine 664 together coordinate Mg(2+). Glutamate 662 provides a ligand contact to ATP. 2 disordered regions span residues 735–799 (VPVG…SGKG) and 897–927 (EEGH…KTET). The segment covering 752 to 769 (LTQQGSGESKDSGSPTHR) has biased composition (polar residues). The segment covering 776 to 788 (ARAESLEHTEKPE) has biased composition (basic and acidic residues). Residues 916 to 927 (LSSTEPCSKTET) show a composition bias toward polar residues.

Mg(2+) is required as a cofactor. As to expression, highly expressed in brain and testis. Expressed in heart, kidney, liver, lung, muscle, spleen, trachea and colon. Expressed in sperm flagellum. In the brain, specifically expressed in ependymal cilia.

The protein localises to the cytoplasm. The protein resides in the cytoskeleton. It is found in the cell projection. It localises to the cilium. Its subcellular location is the cilium axoneme. The protein localises to the flagellum axoneme. It catalyses the reaction L-glutamyl-[protein] + glycine + ATP = glycyl-L-glutamyl-[protein] + ADP + phosphate + H(+). Monoglycylase which modifies alpha- and beta-tubulin, adding a single glycine on the gamma-carboxyl groups of specific glutamate residues to generate monoglycine side chains within the C-terminal tail of tubulin. Not involved in elongation step of the polyglycylation reaction. Preferentially glycylates a beta-tail peptide over the alpha-tail, although shifts its preference toward alpha-tail as beta-tail glutamylation increases. Competes with polyglutamylases for modification site on beta-tubulin substrate, thereby creating an anticorrelation between glycylation and glutamylation reactions. Together with TTLL8, mediates microtubule glycylation of primary and motile cilia, which is essential for their stability and maintenance. Involved in microtubule glycylation of primary cilia in colon which controls cell proliferation of epithelial cells and plays an essential role in colon cancer development. Together with TTLL8, glycylates sperm flagella which regulates axonemal dynein motor activity, thereby controlling flagellar beat, directional sperm swimming and male fertility. This Mus musculus (Mouse) protein is Tubulin monoglycylase TTLL3.